Consider the following 270-residue polypeptide: 4-hydroxy-tetrahydrodipicolinate reductase (270 aa).

NAD(+) contacts are provided by residues 9 to 14 (GAGGRM) and E35. R36 serves as a coordination point for NADP(+). Residues 99 to 101 (GTT) and 123 to 126 (ASNF) contribute to the NAD(+) site. The active-site Proton donor/acceptor is H156. H157 provides a ligand contact to (S)-2,3,4,5-tetrahydrodipicolinate. K160 functions as the Proton donor in the catalytic mechanism. 166-167 (GT) serves as a coordination point for (S)-2,3,4,5-tetrahydrodipicolinate.

This sequence belongs to the DapB family.

The protein localises to the cytoplasm. The catalysed reaction is (S)-2,3,4,5-tetrahydrodipicolinate + NAD(+) + H2O = (2S,4S)-4-hydroxy-2,3,4,5-tetrahydrodipicolinate + NADH + H(+). It carries out the reaction (S)-2,3,4,5-tetrahydrodipicolinate + NADP(+) + H2O = (2S,4S)-4-hydroxy-2,3,4,5-tetrahydrodipicolinate + NADPH + H(+). It participates in amino-acid biosynthesis; L-lysine biosynthesis via DAP pathway; (S)-tetrahydrodipicolinate from L-aspartate: step 4/4. In terms of biological role, catalyzes the conversion of 4-hydroxy-tetrahydrodipicolinate (HTPA) to tetrahydrodipicolinate. The chain is 4-hydroxy-tetrahydrodipicolinate reductase from Haemophilus influenzae (strain 86-028NP).